The sequence spans 128 residues: Small ribosomal subunit protein uS11 (128 aa).

It belongs to the universal ribosomal protein uS11 family. Part of the 30S ribosomal subunit. Interacts with proteins S7 and S18. Binds to IF-3.

Functionally, located on the platform of the 30S subunit, it bridges several disparate RNA helices of the 16S rRNA. Forms part of the Shine-Dalgarno cleft in the 70S ribosome. The protein is Small ribosomal subunit protein uS11 of Porphyromonas gingivalis (strain ATCC BAA-308 / W83).